The following is a 1030-amino-acid chain: MELWLGRLWLYVMLLLLLLQLCQDQELLGPSLQTPSEEDQVPEGLWGPWGRWASCSQPCGVGVQRRSRTCELHPALSLPPRPPRHPEAPQPRGQGSRPQTPRDPQSLYRPQPRGRGGPLRGPASQVGREETQEPRGAQRFRVRDPIKPGMFGYGRVPFALPLHRSRRLAHKPGQPKDSSTAEETLPSQPPSTEPASEKHSPHMQPPELRAQSRSPSAETPRSGTAQTEVPSRTSSAPSDMGIPAPTSSFRDSRSFQGSPEPRMPTSQGAERQPHPFSPVTRSQLSRRHWRPPGSPHRSPDGWLPLTRDSSPHWSLFAPSSPTPECSGESEQMRACSQEPCPPEQPDPRALQCAAFDSQEFMGQLYQWEPFTEVQGSQRCELNCRPRGFRFYVRHTEKVQDGTLCQPGSLDICVAGHCLSPGCDGILGSGRRPDGCGVCGGDGSTCRLVSGNLTDRGGPLGYQKILWIPAGASHLRISQFRPSSNYLALRGPGGRSIINGNWAVDPPGSYAAVGTVFQYNRPPREEGKGETLSAEGPTTQPVDVYMIFQEDNPGVFYQYVTSAAPESPSTMPPALQLQPEMLRGEPLLPSAPRPVRAPGTLQRQARIPQVPPPTHVRTAMGSSAGYWKQVGHSECSASCGKGVWRPIFLCVSRESGEELDEQSCAVGARPPASPESCHRPPCPPYWEAGEWTSCSRSCGPGTQHRQLLCRQEFGGGGSSVPPERCGHLPRPNITQSCQLRLCGHWEISSPWSQCSVRCGRGQRSRQVRCVGSNGHEVGKQECASGPPPPPSREACDMGPCTTAWFYSDWSSKCSAECGTGIQRRAVVCLRSGETLQGDPEAGSTEQGCPLRSRPPDMRACSLGPCEKTWRWYTGPWSECSSECGSGTQHRDIICVSKLGTKFNVTSPSNCSHLPRPPALQPCQGQACEDQWFSTLWSPCSQSCQGGVQTREVQCLSSNHTLSSRCPPHLRPSRKRPCNSQPCNQRPDDQCKDSSPHCPLVVQARLCVYPYYTATCCRSCAHVLEQSQLEPA.

The first 24 residues, 1 to 24 (MELWLGRLWLYVMLLLLLLQLCQD), serve as a signal peptide directing secretion. Positions 47 to 91 (GPWGRWASCSQPCGVGVQRRSRTCELHPALSLPPRPPRHPEAPQP) constitute a TSP type-1 1 domain. Disordered stretches follow at residues 73 to 150 (HPAL…KPGM) and 168 to 306 (LAHK…LPLT). Polar residues-rich tracts occupy residues 176 to 186 (KDSSTAEETLP), 211 to 237 (QSRS…SSAP), and 245 to 257 (PTSS…SFQG). N-linked (GlcNAc...) asparagine glycosylation is found at Asn451 and Asn731. TSP type-1 domains are found at residues 681–740 (CPPY…QLRL), 741–800 (CGHW…GPCT), 803–865 (WFYS…GPCE), 866–925 (KTWR…QGQA), and 926–982 (CEDQ…QPCN). The PLAC domain maps to 985-1022 (PDDQCKDSSPHCPLVVQARLCVYPYYTATCCRSCAHVL).

Interacts with CTSB. Interacts with FBN1. Glycosylated. Can be O-fucosylated by POFUT2 on a serine or a threonine residue found within the consensus sequence C1-X(2)-(S/T)-C2-G of the TSP type-1 repeat domains where C1 and C2 are the first and second cysteine residue of the repeat, respectively. Fucosylated repeats can then be further glycosylated by the addition of a beta-1,3-glucose residue by the glucosyltransferase, B3GALTL. Fucosylation mediates the efficient secretion of ADAMTS family members. Can also be C-glycosylated with one or two mannose molecules on tryptophan residues within the consensus sequence W-X-X-W of the TPRs, and N-glycosylated. These other glycosylations can also facilitate secretion.

The protein localises to the secreted. The protein resides in the extracellular space. Its subcellular location is the extracellular matrix. Positive regulation of apoptosis. May facilitate FBN1 microfibril biogenesis. This is ADAMTS-like protein 4 from Rattus norvegicus (Rat).